Here is a 559-residue protein sequence, read N- to C-terminus: MSMLKDPSSKYRAFPTIDIPDRTWPSKTITEAPIWCSSDLRDGNQSLIEPMDAVKKLRFWKTLVAVGVKEIEASFPAASQTDFDFVRTLIEDNHIPEDTTIQVLTQGREDLIARTFESLRGAKKAIVHLYNATSPSFRRIVFNQDKEGIKAIAVNAAKLFVKYAAQQPETQWTFEYSPETFSATELEFAKEVCDAVIEVWNPTPEHKMILNLPATVECATPNIYADQIEWFGRHINRRDSVIISLHTHNDRGTGVAATELGLMAGADRVEGCLFGNGERTGNVDLVTVALNMYTQGLDPQLDFSDIDGVRKVVEECNQIQVHPRHPYVGDLVHTAFSGSHQDAIRKGFTQQKDDALWEVPYLPIDPADIGRSYEAVIRVNSQSGKGGIAYLLEQEYDISLPRRMQIEFSQVVQAETDRVGLEMTAPQIYALLQREYLQANTPYALVSHRLQEENGNSFVEVEVSGKGQGETNLHWKGKGNGALEALVAGLPIGVEIMDYNEHAIGAGTNAKAAAYIELRVNGERPVHGVGIDENITTASFKALFSALNRSLSQQEAKAA.

The Pyruvate carboxyltransferase domain maps to 33–307 (PIWCSSDLRD…DPQLDFSDID (275 aa)). Residues Asp-42, His-246, His-248, and Asn-282 each coordinate Mg(2+). The tract at residues 439-559 (ANTPYALVSH…SLSQQEAKAA (121 aa)) is regulatory domain.

The protein belongs to the alpha-IPM synthase/homocitrate synthase family. LeuA type 2 subfamily. Homodimer. Requires Mg(2+) as cofactor.

The protein localises to the cytoplasm. The catalysed reaction is 3-methyl-2-oxobutanoate + acetyl-CoA + H2O = (2S)-2-isopropylmalate + CoA + H(+). The protein operates within amino-acid biosynthesis; L-leucine biosynthesis; L-leucine from 3-methyl-2-oxobutanoate: step 1/4. Functionally, catalyzes the condensation of the acetyl group of acetyl-CoA with 3-methyl-2-oxobutanoate (2-ketoisovalerate) to form 3-carboxy-3-hydroxy-4-methylpentanoate (2-isopropylmalate). In Pseudomonas fluorescens (strain SBW25), this protein is 2-isopropylmalate synthase.